The sequence spans 447 residues: Rab GDP dissociation inhibitor alpha (447 aa).

The protein belongs to the Rab GDI family. As to quaternary structure, interacts with RHOH. Interacts with the non-phosphorylated forms of RAB1A, RAB3A, RAB5A, RAB5B, RAB5C, RAB8A, RAB8B, RAB10, RAB12, RAB35, and RAB43. In terms of tissue distribution, brain; predominant in neural and sensory tissues.

It is found in the cytoplasm. It localises to the golgi apparatus. The protein resides in the trans-Golgi network. Functionally, regulates the GDP/GTP exchange reaction of most Rab proteins by inhibiting the dissociation of GDP from them, and the subsequent binding of GTP to them. Promotes the dissociation of GDP-bound Rab proteins from the membrane and inhibits their activation. Promotes the dissociation of RAB1A, RAB3A, RAB5A and RAB10 from membranes. This is Rab GDP dissociation inhibitor alpha (GDI1) from Homo sapiens (Human).